The following is a 192-amino-acid chain: Probable nicotinate-nucleotide adenylyltransferase (192 aa).

This sequence belongs to the NadD family.

It catalyses the reaction nicotinate beta-D-ribonucleotide + ATP + H(+) = deamido-NAD(+) + diphosphate. It participates in cofactor biosynthesis; NAD(+) biosynthesis; deamido-NAD(+) from nicotinate D-ribonucleotide: step 1/1. Catalyzes the reversible adenylation of nicotinate mononucleotide (NaMN) to nicotinic acid adenine dinucleotide (NaAD). This Bradyrhizobium sp. (strain BTAi1 / ATCC BAA-1182) protein is Probable nicotinate-nucleotide adenylyltransferase.